Here is an 86-residue protein sequence, read N- to C-terminus: Large ribosomal subunit protein bL27 (86 aa).

The protein belongs to the bacterial ribosomal protein bL27 family.

This is Large ribosomal subunit protein bL27 from Christiangramia forsetii (strain DSM 17595 / CGMCC 1.15422 / KT0803) (Gramella forsetii).